Reading from the N-terminus, the 86-residue chain is Small ribosomal subunit protein bS20 (86 aa).

Belongs to the bacterial ribosomal protein bS20 family.

Binds directly to 16S ribosomal RNA. The chain is Small ribosomal subunit protein bS20 from Rhodococcus jostii (strain RHA1).